The sequence spans 199 residues: Imidazole glycerol phosphate synthase subunit HisH 2 (199 aa).

A Glutamine amidotransferase type-1 domain is found at 1-199; sequence MIAVIDVSGN…NNFLSLESTC (199 aa). Cys-76 functions as the Nucleophile in the catalytic mechanism. Active-site residues include His-177 and Glu-179.

As to quaternary structure, heterodimer of HisH and HisF.

It is found in the cytoplasm. The catalysed reaction is 5-[(5-phospho-1-deoxy-D-ribulos-1-ylimino)methylamino]-1-(5-phospho-beta-D-ribosyl)imidazole-4-carboxamide + L-glutamine = D-erythro-1-(imidazol-4-yl)glycerol 3-phosphate + 5-amino-1-(5-phospho-beta-D-ribosyl)imidazole-4-carboxamide + L-glutamate + H(+). The enzyme catalyses L-glutamine + H2O = L-glutamate + NH4(+). Its pathway is amino-acid biosynthesis; L-histidine biosynthesis; L-histidine from 5-phospho-alpha-D-ribose 1-diphosphate: step 5/9. Its function is as follows. IGPS catalyzes the conversion of PRFAR and glutamine to IGP, AICAR and glutamate. The HisH subunit provides the glutamine amidotransferase activity that produces the ammonia necessary to HisF for the synthesis of IGP and AICAR. This is Imidazole glycerol phosphate synthase subunit HisH 2 from Legionella pneumophila (strain Paris).